A 416-amino-acid polypeptide reads, in one-letter code: Phosphoglycerate kinase (416 aa).

Residues V23, D24, F25, N26, Q38, R39, S62, H63, G65, R66, L121, R122, H169, and R170 each contribute to the (2R)-3-phosphoglycerate site. ADP is bound at residue G213. Position 213 (G213) interacts with CDP. The AMP site is built by A214 and K215. A214 provides a ligand contact to ATP. Mg(2+) is bound at residue A214. D218 contributes to the CDP binding site. D218 lines the Mg(2+) pocket. K219 contacts AMP. K219 serves as a coordination point for ATP. G237 contacts ADP. G237 contacts CDP. AMP contacts are provided by G238 and G312. G238 and G312 together coordinate ATP. CDP is bound by residues G337, A339, and F342. F342 contacts ADP. Residue E343 coordinates AMP. The ATP site is built by E343, D374, and T375. D374 is a Mg(2+) binding site.

This sequence belongs to the phosphoglycerate kinase family. Monomer. Requires Mg(2+) as cofactor.

Its subcellular location is the cytoplasm. The protein resides in the mitochondrion. It carries out the reaction (2R)-3-phosphoglycerate + ATP = (2R)-3-phospho-glyceroyl phosphate + ADP. It functions in the pathway carbohydrate degradation; glycolysis; pyruvate from D-glyceraldehyde 3-phosphate: step 2/5. In terms of biological role, catalyzes one of the two ATP producing reactions in the glycolytic pathway via the reversible conversion of 1,3-diphosphoglycerate to 3-phosphoglycerate. Both L- and D- forms of purine and pyrimidine nucleotides can be used as substrates, but the activity is much lower on pyrimidines. Negatively regulates the biosynthesis of acetyl-CoA from pyruvate in the mitochondrion. This Funneliformis mosseae (Endomycorrhizal fungus) protein is Phosphoglycerate kinase (PGK).